The sequence spans 238 residues: Thiamine import ATP-binding protein ThiQ (238 aa).

The ABC transporter domain maps to 1–234 (MSSTALAVKG…RDIAAINRFL (234 aa)). 36–43 (GASGSGKS) contacts ATP.

The protein belongs to the ABC transporter superfamily. Thiamine importer (TC 3.A.1.19.1) family. In terms of assembly, the complex is composed of two ATP-binding proteins (ThiQ), two transmembrane proteins (ThiP) and a solute-binding protein (ThiB).

Its subcellular location is the cell inner membrane. The catalysed reaction is thiamine(out) + ATP + H2O = thiamine(in) + ADP + phosphate + H(+). Functionally, part of the ABC transporter complex ThiBPQ involved in thiamine import. Responsible for energy coupling to the transport system. In Rhizobium meliloti (strain 1021) (Ensifer meliloti), this protein is Thiamine import ATP-binding protein ThiQ.